Here is a 169-residue protein sequence, read N- to C-terminus: Cuticle protein 21 (169 aa).

6 tandem repeats follow at residues 21 to 24, 27 to 30, 33 to 36, 39 to 42, 47 to 50, and 53 to 56. Positions 65-135 constitute a Chitin-binding type R&amp;R domain; the sequence is NPQYSYAYNV…KEAGAHPAPV (71 aa). 3 tandem repeats follow at residues 140-143, 146-149, and 160-163.

Functionally, component of the cuticle of migratory locust which contains more than 100 different structural proteins. This Locusta migratoria (Migratory locust) protein is Cuticle protein 21 (ACP21).